Consider the following 132-residue polypeptide: Mite allergen Der p 5 (132 aa).

Immunodominant conformational IgE-binding epitope regions lie at residues 25-53 and 102-132; these read DYQN…FYLQ and EQYN…KIEV.

This sequence belongs to the mite group 5 allergen family. In terms of assembly, monomer. Trimer of homodimers. Oligomerizes in a concentration-dependent manner.

In Dermatophagoides pteronyssinus (European house dust mite), this protein is Mite allergen Der p 5 (DERP5).